A 747-amino-acid polypeptide reads, in one-letter code: Fatty acid oxidation complex subunit alpha (747 aa).

The tract at residues 1–197 (MGASATNSVT…KMGLVDDVVP (197 aa)) is enoyl-CoA hydratase. The segment at 313–747 (RAIHRVGVLG…NIDEVTDVAS (435 aa)) is 3-hydroxyacyl-CoA dehydrogenase. The segment at 590 to 614 (YLYSNPTKNSSPTKNGNSPAKRNSF) is disordered. A compositionally biased stretch (polar residues) spans 593–610 (SNPTKNSSPTKNGNSPAK).

The protein in the N-terminal section; belongs to the enoyl-CoA hydratase/isomerase family. It in the central section; belongs to the 3-hydroxyacyl-CoA dehydrogenase family. In terms of assembly, heterotetramer of two alpha chains (FadJ) and two beta chains (FadI).

It localises to the cytoplasm. The enzyme catalyses a (3S)-3-hydroxyacyl-CoA = a (2E)-enoyl-CoA + H2O. It catalyses the reaction a 4-saturated-(3S)-3-hydroxyacyl-CoA = a (3E)-enoyl-CoA + H2O. The catalysed reaction is a (3S)-3-hydroxyacyl-CoA + NAD(+) = a 3-oxoacyl-CoA + NADH + H(+). It carries out the reaction (3S)-3-hydroxybutanoyl-CoA = (3R)-3-hydroxybutanoyl-CoA. The protein operates within lipid metabolism; fatty acid beta-oxidation. Functionally, catalyzes the formation of a hydroxyacyl-CoA by addition of water on enoyl-CoA. Also exhibits 3-hydroxyacyl-CoA epimerase and 3-hydroxyacyl-CoA dehydrogenase activities. The protein is Fatty acid oxidation complex subunit alpha of Yersinia pseudotuberculosis serotype O:1b (strain IP 31758).